A 401-amino-acid chain; its full sequence is Acetate kinase (401 aa).

Asparagine 9 is a binding site for Mg(2+). Position 16 (lysine 16) interacts with ATP. Position 88 (arginine 88) interacts with substrate. The active-site Proton donor/acceptor is aspartate 147. ATP contacts are provided by residues 207–211 (HLGNG), 282–284 (DCR), and 333–337 (GIGEN). Glutamate 388 serves as a coordination point for Mg(2+).

Belongs to the acetokinase family. Homodimer. Mg(2+) serves as cofactor. Requires Mn(2+) as cofactor.

Its subcellular location is the cytoplasm. It carries out the reaction acetate + ATP = acetyl phosphate + ADP. The protein operates within metabolic intermediate biosynthesis; acetyl-CoA biosynthesis; acetyl-CoA from acetate: step 1/2. Catalyzes the formation of acetyl phosphate from acetate and ATP. Can also catalyze the reverse reaction. This Haemophilus influenzae (strain PittGG) protein is Acetate kinase.